The sequence spans 162 residues: Transcription elongation factor GreA (162 aa).

A coiled-coil region spans residues 45–65 (NAEYHAAKERQLFIEARINEL).

This sequence belongs to the GreA/GreB family.

Functionally, necessary for efficient RNA polymerase transcription elongation past template-encoded arresting sites. The arresting sites in DNA have the property of trapping a certain fraction of elongating RNA polymerases that pass through, resulting in locked ternary complexes. Cleavage of the nascent transcript by cleavage factors such as GreA or GreB allows the resumption of elongation from the new 3'terminus. GreA releases sequences of 2 to 3 nucleotides. The sequence is that of Transcription elongation factor GreA from Wolinella succinogenes (strain ATCC 29543 / DSM 1740 / CCUG 13145 / JCM 31913 / LMG 7466 / NCTC 11488 / FDC 602W) (Vibrio succinogenes).